The sequence spans 207 residues: Large ribosomal subunit protein uL4 (207 aa).

The segment at Ser55–Gln75 is disordered. Positions Gly60 to Gly71 are enriched in basic residues.

Belongs to the universal ribosomal protein uL4 family. As to quaternary structure, part of the 50S ribosomal subunit.

Its function is as follows. One of the primary rRNA binding proteins, this protein initially binds near the 5'-end of the 23S rRNA. It is important during the early stages of 50S assembly. It makes multiple contacts with different domains of the 23S rRNA in the assembled 50S subunit and ribosome. Forms part of the polypeptide exit tunnel. This is Large ribosomal subunit protein uL4 from Staphylococcus epidermidis (strain ATCC 35984 / DSM 28319 / BCRC 17069 / CCUG 31568 / BM 3577 / RP62A).